We begin with the raw amino-acid sequence, 379 residues long: Sulfate adenylyltransferase (379 aa).

This sequence belongs to the sulfate adenylyltransferase family.

It carries out the reaction sulfate + ATP + H(+) = adenosine 5'-phosphosulfate + diphosphate. Its pathway is sulfur metabolism; hydrogen sulfide biosynthesis; sulfite from sulfate: step 1/3. The chain is Sulfate adenylyltransferase from Thermococcus onnurineus (strain NA1).